We begin with the raw amino-acid sequence, 452 residues long: Bifunctional protein GlmU (452 aa).

The segment at 1–226 (MSLAVVILAA…GWEVDGVNDR (226 aa)) is pyrophosphorylase. UDP-N-acetyl-alpha-D-glucosamine contacts are provided by residues 8–11 (LAAG), Lys22, Gln73, 78–79 (GT), 99–101 (YGD), Gly136, Glu151, Asn166, and Asn224. Asp101 contacts Mg(2+). Asn224 serves as a coordination point for Mg(2+). Residues 227-247 (VQLARLERIYQQAQAETLMRD) form a linker region. The segment at 248 to 452 (GVTLLDPSRL…VANWQRPKKG (205 aa)) is N-acetyltransferase. 2 residues coordinate UDP-N-acetyl-alpha-D-glucosamine: Arg330 and Lys348. Residue His360 is the Proton acceptor of the active site. Positions 363 and 374 each coordinate UDP-N-acetyl-alpha-D-glucosamine. Residues Ala377, 383 to 384 (NY), Ser402, Ala420, and Arg437 contribute to the acetyl-CoA site.

The protein in the N-terminal section; belongs to the N-acetylglucosamine-1-phosphate uridyltransferase family. This sequence in the C-terminal section; belongs to the transferase hexapeptide repeat family. In terms of assembly, homotrimer. It depends on Mg(2+) as a cofactor.

The protein resides in the cytoplasm. The enzyme catalyses alpha-D-glucosamine 1-phosphate + acetyl-CoA = N-acetyl-alpha-D-glucosamine 1-phosphate + CoA + H(+). The catalysed reaction is N-acetyl-alpha-D-glucosamine 1-phosphate + UTP + H(+) = UDP-N-acetyl-alpha-D-glucosamine + diphosphate. It functions in the pathway nucleotide-sugar biosynthesis; UDP-N-acetyl-alpha-D-glucosamine biosynthesis; N-acetyl-alpha-D-glucosamine 1-phosphate from alpha-D-glucosamine 6-phosphate (route II): step 2/2. The protein operates within nucleotide-sugar biosynthesis; UDP-N-acetyl-alpha-D-glucosamine biosynthesis; UDP-N-acetyl-alpha-D-glucosamine from N-acetyl-alpha-D-glucosamine 1-phosphate: step 1/1. It participates in bacterial outer membrane biogenesis; LPS lipid A biosynthesis. Functionally, catalyzes the last two sequential reactions in the de novo biosynthetic pathway for UDP-N-acetylglucosamine (UDP-GlcNAc). The C-terminal domain catalyzes the transfer of acetyl group from acetyl coenzyme A to glucosamine-1-phosphate (GlcN-1-P) to produce N-acetylglucosamine-1-phosphate (GlcNAc-1-P), which is converted into UDP-GlcNAc by the transfer of uridine 5-monophosphate (from uridine 5-triphosphate), a reaction catalyzed by the N-terminal domain. This chain is Bifunctional protein GlmU, found in Alcanivorax borkumensis (strain ATCC 700651 / DSM 11573 / NCIMB 13689 / SK2).